The primary structure comprises 313 residues: tRNA dimethylallyltransferase (313 aa).

11-18 (GPTASGKT) contacts ATP. 13–18 (TASGKT) lines the substrate pocket. 2 interaction with substrate tRNA regions span residues 36–39 (DSRQ) and 160–164 (QRLIR).

This sequence belongs to the IPP transferase family. Monomer. It depends on Mg(2+) as a cofactor.

It carries out the reaction adenosine(37) in tRNA + dimethylallyl diphosphate = N(6)-dimethylallyladenosine(37) in tRNA + diphosphate. Its function is as follows. Catalyzes the transfer of a dimethylallyl group onto the adenine at position 37 in tRNAs that read codons beginning with uridine, leading to the formation of N6-(dimethylallyl)adenosine (i(6)A). In Chlorobaculum parvum (strain DSM 263 / NCIMB 8327) (Chlorobium vibrioforme subsp. thiosulfatophilum), this protein is tRNA dimethylallyltransferase.